The following is a 196-amino-acid chain: Ribosomal RNA large subunit methyltransferase E (196 aa).

S-adenosyl-L-methionine contacts are provided by Gly-50, Trp-52, Asp-70, Asp-87, and Asp-112. Lys-152 serves as the catalytic Proton acceptor.

This sequence belongs to the class I-like SAM-binding methyltransferase superfamily. RNA methyltransferase RlmE family.

The protein localises to the cytoplasm. The enzyme catalyses uridine(2552) in 23S rRNA + S-adenosyl-L-methionine = 2'-O-methyluridine(2552) in 23S rRNA + S-adenosyl-L-homocysteine + H(+). In terms of biological role, specifically methylates the uridine in position 2552 of 23S rRNA at the 2'-O position of the ribose in the fully assembled 50S ribosomal subunit. In Bdellovibrio bacteriovorus (strain ATCC 15356 / DSM 50701 / NCIMB 9529 / HD100), this protein is Ribosomal RNA large subunit methyltransferase E.